The chain runs to 374 residues: DNA replication and repair protein RecF (374 aa).

34-41 contributes to the ATP binding site; sequence GDNGAGKT.

It belongs to the RecF family.

It localises to the cytoplasm. In terms of biological role, the RecF protein is involved in DNA metabolism; it is required for DNA replication and normal SOS inducibility. RecF binds preferentially to single-stranded, linear DNA. It also seems to bind ATP. This Rhizobium etli (strain ATCC 51251 / DSM 11541 / JCM 21823 / NBRC 15573 / CFN 42) protein is DNA replication and repair protein RecF.